Reading from the N-terminus, the 190-residue chain is Potassium-transporting ATPase KdpC subunit (190 aa).

The chain crosses the membrane as a helical span at residues 10–30; the sequence is TFLFLLLITGGVYPLLTTALG.

Belongs to the KdpC family. The system is composed of three essential subunits: KdpA, KdpB and KdpC.

The protein localises to the cell inner membrane. Functionally, part of the high-affinity ATP-driven potassium transport (or Kdp) system, which catalyzes the hydrolysis of ATP coupled with the electrogenic transport of potassium into the cytoplasm. This subunit acts as a catalytic chaperone that increases the ATP-binding affinity of the ATP-hydrolyzing subunit KdpB by the formation of a transient KdpB/KdpC/ATP ternary complex. The sequence is that of Potassium-transporting ATPase KdpC subunit from Escherichia coli (strain SMS-3-5 / SECEC).